We begin with the raw amino-acid sequence, 269 residues long: Shikimate dehydrogenase (NADP(+)) (269 aa).

Shikimate contacts are provided by residues 14-16 (SKS) and Thr61. Catalysis depends on Lys65, which acts as the Proton acceptor. Glu77 provides a ligand contact to NADP(+). Asn86 and Asp102 together coordinate shikimate. NADP(+) contacts are provided by residues 126-130 (GAGGA), 149-154 (NRTLSK), and Met213. Tyr215 contacts shikimate. NADP(+) is bound at residue Gly238.

The protein belongs to the shikimate dehydrogenase family. Homodimer.

The catalysed reaction is shikimate + NADP(+) = 3-dehydroshikimate + NADPH + H(+). The protein operates within metabolic intermediate biosynthesis; chorismate biosynthesis; chorismate from D-erythrose 4-phosphate and phosphoenolpyruvate: step 4/7. Involved in the biosynthesis of the chorismate, which leads to the biosynthesis of aromatic amino acids. Catalyzes the reversible NADPH linked reduction of 3-dehydroshikimate (DHSA) to yield shikimate (SA). The polypeptide is Shikimate dehydrogenase (NADP(+)) (Pasteurella multocida (strain Pm70)).